The following is a 524-amino-acid chain: Probable cytochrome P450 519C1 (524 aa).

The chain crosses the membrane as a helical span at residues 1–21 (MNILLLIFYFLVCFLIFDFIK). Cys470 serves as a coordination point for heme.

This sequence belongs to the cytochrome P450 family. Heme serves as cofactor.

Its subcellular location is the membrane. This chain is Probable cytochrome P450 519C1 (cyp519C1), found in Dictyostelium discoideum (Social amoeba).